Consider the following 193-residue polypeptide: Bcl-2-binding component 3 (193 aa).

2 disordered regions span residues 1 to 32 (MARA…RLMP) and 71 to 131 (ALGG…VEEE). Serine 10 bears the Phosphoserine mark. The BH3 signature appears at 137-151 (IGAQLRRMADDLNAQ).

Belongs to the Bcl-2 family. As to quaternary structure, interacts with MCL1 and BCL2A1. Interacts (via BH3 domain) with BCL2 and BCL2L1/BCL-XL. Interacts (via BH3 domain) with NOL3/ARC (via CARD domain); this interaction prevents BBC3 association with BCL2 and results in CASP8 activation.

It localises to the mitochondrion. Functionally, essential mediator of p53/TP53-dependent and p53/TP53-independent apoptosis. Promotes partial unfolding of BCL2L1 and dissociation of BCL2L1 from p53/TP53, releasing the bound p53/TP53 to induce apoptosis. Regulates ER stress-induced neuronal apoptosis. This chain is Bcl-2-binding component 3 (Bbc3), found in Rattus norvegicus (Rat).